Here is a 547-residue protein sequence, read N- to C-terminus: CTP synthase (547 aa).

Residues M1 to I265 are amidoligase domain. Residue S13 participates in CTP binding. Residue S13 participates in UTP binding. Residues S14 to L19 and D71 each bind ATP. Mg(2+) is bound by residues D71 and E139. CTP is bound by residues D146–E148, K186–Q191, and K222. UTP is bound by residues K186 to Q191 and K222. The Glutamine amidotransferase type-1 domain occupies R291–L546. L-glutamine is bound at residue G353. The active-site Nucleophile; for glutamine hydrolysis is C380. L-glutamine-binding positions include L381–Q384, E404, and R474. Residues H519 and E521 contribute to the active site.

Belongs to the CTP synthase family. Homotetramer.

It catalyses the reaction UTP + L-glutamine + ATP + H2O = CTP + L-glutamate + ADP + phosphate + 2 H(+). The enzyme catalyses L-glutamine + H2O = L-glutamate + NH4(+). The catalysed reaction is UTP + NH4(+) + ATP = CTP + ADP + phosphate + 2 H(+). The protein operates within pyrimidine metabolism; CTP biosynthesis via de novo pathway; CTP from UDP: step 2/2. Its activity is regulated as follows. Allosterically activated by GTP, when glutamine is the substrate; GTP has no effect on the reaction when ammonia is the substrate. The allosteric effector GTP functions by stabilizing the protein conformation that binds the tetrahedral intermediate(s) formed during glutamine hydrolysis. Inhibited by the product CTP, via allosteric rather than competitive inhibition. In terms of biological role, catalyzes the ATP-dependent amination of UTP to CTP with either L-glutamine or ammonia as the source of nitrogen. Regulates intracellular CTP levels through interactions with the four ribonucleotide triphosphates. This is CTP synthase from Cereibacter sphaeroides (strain ATCC 17023 / DSM 158 / JCM 6121 / CCUG 31486 / LMG 2827 / NBRC 12203 / NCIMB 8253 / ATH 2.4.1.) (Rhodobacter sphaeroides).